The chain runs to 248 residues: Spherulin-1B (248 aa).

The first 20 residues, 1 to 20 (MQVRNILVALVVVCFAVSEA), serve as a signal peptide directing secretion. The Cupin type-1 domain occupies 61–207 (FDFKNSKLGV…SLNISSIQTV (147 aa)). Residues His-110, His-112, Glu-117, and His-157 each contribute to the Mn(2+) site. A glycan (N-linked (GlcNAc...) asparagine) is linked at Asn-200.

Belongs to the germin family.

It localises to the secreted. The protein localises to the cell wall. This is Spherulin-1B from Physarum polycephalum (Slime mold).